The following is a 1704-amino-acid chain: MVVLRQLRLLLWKNYTLKKRKVLVTVLELFLPLLFSGILIWLRLKIQSENVPNATVYPDQHIQELPLFFSFPPPGGSWELAYVPSHSDAARTITEAVRREFMIKMRVHGFSSEKDFEDYVRYDNHSSNVLAAVVFEHTFNHSKDPLPLAVRYHLRFSYTRRNYMWTQTGNLFLKETEGWHTASLFPLFPSPGPREPSSPDGGEPGYIREGFLAVQHAVDKAIMHYHANASAHQLFQKLTVITKRFPFPPYISDPFLIAIQYQLPLLLMLSFTYTSLTIIRAVVQEKEKKLKEYMRMMGLSSWLHWSAWFLMFLLFSLIVVSFMTLLFCVKVKKDIAVLSNSDPSLVLAFLLCFAISSISFSFMVSTFFSKANMAATVGGFLYFFTYTPYFFVAPRYNWMTLSQKLLSCLLSNVAMAMGAQLIGKFEAKGTGIQWCDLLNPVNVDDDFCFGQVLGMLLLDSVLYGLVTWYVEAVFPGQFGVPQPWYFFLMPSYWCGNPRTVVGKEEEGGDPEKAFRTEYFEAEPEDLAAGIKIKHLSKVFQVGNKDKMGIRDLTLNLYEGQITVLLGHNGAGKTTTMSMLTGLFPPTSGHAYIRGYEISQDMVQIRKSLGLCPQHDVLFDNLTVAEHLYFYAQLKGLSVQKCPEEVKQMLHTLGLEDKRDSRSKFLSGGMKRKLAIGIALIAGSKVLMLDEPTSGMDAVSRRAIWDLLQQQKSDRTVLLTTHFMDEADLLGDRIAILAKGELQCCGSSLFLKQKYGAGYHMTLVKEPHCNPEGISQLVHHHVPNAMLESHAGAELSFILPKESTHRFESLFAKLEKKQKELGIASFGASVTTMEEVFLRVGKLVDTSMDIQAIQLPALQYQHERRASDWALDSNLCGVMDPTNGIGALIEEEEVLVKLNTGLALHCQQFWAMFLKKAAYSWREWRMVAAQILVPVTCLTLALLAINYTSEIFDDPPLKLSLNEYGTTVVPFSVPGTSRLGQQLSEHLRDMLQAERQEPREVLGDLEEFLVFRASVEGGGFNERCLVATSFKDSGERTVVTALFNNQAYHSPATALAIVDNLLFKLLCGPRASIEISNYPQPRSTLQVAKDQFNEGRKGFDIALNLLIAMAFLASTFSILAVSERAVQAKHVQFVSGVHVATFWLSALLWDLISFLVPSLLLLVVFRAFDVHAFTRDGHMADLLLLLMLYGWAIIPLMYLLSFFFSAASTAYTRLTIFNILSGIATFIVVTIMRIPAVKLEELSRTLDHVFLVLPNHCLGMAVSNFYENYETRRYCTSSEVATHYCKKYNIQYQENFYAWSTPGIGKFVTSMAASGGIYLTLLFLIETNLLWRLRTFVCAFRRRWTLAELQNRTSVLPEDQDVADERSRVLVPSLDSMLDTPLIINELSKVYDQRAPLLAVDRISLAVQKGECFGLLGFNGAGKTTTFKMLTGEETITSGDAFVGGYSISSDIGKVRQRMGYCPQFDALLDHMTGREMLVMYARLRGIPERLIDACVENTLRGLLLEPHANKLVKTYSGGNKRKLSTGIALIGEPAVIFLDEPSTGMDPVARRLLWDTVARARESGKAIVITSHSMEECEALCTRLAIMVQGQFKCLGSPQHLKSKFGSGYSLQAKVRSEGKQEVLEEFKAFVDLTFPGSVLEDEHQDMVHYHLPGCDLSWAKVFGILEKAKEKYGVDDYSVSQISLEQVFLSFAHLQPPTTEDGR.

N-linked (GlcNAc...) asparagine glycosylation is present at Asn14. A helical membrane pass occupies residues 22-42; the sequence is VLVTVLELFLPLLFSGILIWL. N-linked (GlcNAc...) asparagine glycosylation is found at Asn53, Asn124, Asn140, and Asn228. Transmembrane regions (helical) follow at residues 251-271, 307-327, 344-364, 373-393, and 405-425; these read ISDPFLIAIQYQLPLLLMLSF, AWFLMFLLFSLIVVSFMTLLF, SLVLAFLLCFAISSISFSFMV, MAATVGGFLYFFTYTPYFFVA, and LLSCLLSNVAMAMGAQLIGKF. The region spanning 530-763 is the ABC transporter 1 domain; that stretch reads IKIKHLSKVF…YGAGYHMTLV (234 aa). 566–573 contributes to the ATP binding site; it reads GHNGAGKT. Residues Asn620 and Asn945 are each glycosylated (N-linked (GlcNAc...) asparagine). Transmembrane regions (helical) follow at residues 1100–1120, 1144–1164, 1183–1203, 1213–1233, 1245–1265, and 1310–1330; these read IALNLLIAMAFLASTFSILAV, SALLWDLISFLVPSLLLLVVF, LLLMLYGWAIIPLMYLLSFFF, LTIFNILSGIATFIVVTIMRI, LDHVFLVLPNHCLGMAVSNFY, and MAASGGIYLTLLFLIETNLLW. Asn1350 carries an N-linked (GlcNAc...) asparagine glycan. Positions 1381-1614 constitute an ABC transporter 2 domain; the sequence is LIINELSKVY…FGSGYSLQAK (234 aa). 1416-1423 lines the ATP pocket; that stretch reads GFNGAGKT.

In terms of assembly, homooligomer; disulfide-linked. Post-translationally, N-glycosylated. Localization at intracellular vesicles is accompanied by processing of oligosaccharide from high mannose type to complex type. N-linked glycosylation at Asn-124 and Asn-140 is required for stability and efficient anterograde trafficking and prevents from proteasomal degradation. Proteolytically cleaved by CTSL and to a lower extent by CTSB within multivesicular bodies (MVB) and lamellar bodies (LB) leading to a mature form of 150 kDa. As to expression, highly expressed in lung, moderately expressed in stomach, intestine, and kidney and weakly expressed in thyroid, brain, liver, spleen, heart, testis, and thymus.

It localises to the endosome. Its subcellular location is the multivesicular body membrane. The protein localises to the cytoplasmic vesicle membrane. It is found in the late endosome membrane. The protein resides in the lysosome membrane. It catalyses the reaction ATP + H2O + xenobioticSide 1 = ADP + phosphate + xenobioticSide 2.. The enzyme catalyses a 1,2-diacyl-sn-glycero-3-phosphocholine(in) + ATP + H2O = a 1,2-diacyl-sn-glycero-3-phosphocholine(out) + ADP + phosphate + H(+). The catalysed reaction is ATP + H2O + phospholipidSide 1 = ADP + phosphate + phospholipidSide 2.. It carries out the reaction 1,2-dihexadecanoyl-sn-glycero-3-phosphocholine(in) + ATP + H2O = 1,2-dihexadecanoyl-sn-glycero-3-phosphocholine(out) + ADP + phosphate + H(+). It catalyses the reaction cholesterol(in) + ATP + H2O = cholesterol(out) + ADP + phosphate + H(+). The enzyme catalyses a 1,2-diacyl-sn-glycero-3-phospho-(1'-sn-glycerol)(in) + ATP + H2O = a 1,2-diacyl-sn-glycero-3-phospho-(1'-sn-glycerol)(out) + ADP + phosphate + H(+). Catalyzes the ATP-dependent transport of phospholipids such as phosphatidylcholine and phosphoglycerol from the cytoplasm into the lumen side of lamellar bodies, in turn participates in the lamellar bodies biogenesis and homeostasis of pulmonary surfactant. Transports preferentially phosphatidylcholine containing short acyl chains. In addition plays a role as an efflux transporter of miltefosine across macrophage membranes and free cholesterol (FC) through intralumenal vesicles by removing FC from the cell as a component of surfactant and protects cells from free cholesterol toxicity. The sequence is that of Phospholipid-transporting ATPase ABCA3 from Rattus norvegicus (Rat).